The primary structure comprises 359 residues: Protein LpfD (359 aa).

An N-terminal signal peptide occupies residues 1–24 (MLKKLIMFTGLLGGSVLFSGQALA).

This sequence belongs to the fimbrial protein family.

The protein resides in the fimbrium. In Salmonella typhimurium (strain LT2 / SGSC1412 / ATCC 700720), this protein is Protein LpfD (lpfD).